The following is a 71-amino-acid chain: Small ribosomal subunit protein bS21 (71 aa).

It belongs to the bacterial ribosomal protein bS21 family.

The polypeptide is Small ribosomal subunit protein bS21 (Alteromonas mediterranea (strain DSM 17117 / CIP 110805 / LMG 28347 / Deep ecotype)).